The sequence spans 302 residues: ATP synthase subunit b 1 (302 aa).

The helical transmembrane segment at 5-22 threads the bilayer; sequence WFTVIAQGINFLLLLWLL. The interval 278–302 is disordered; the sequence is GLPENEGTDNPEANPPHAEAKIPHA.

Belongs to the ATPase B chain family. As to quaternary structure, F-type ATPases have 2 components, F(1) - the catalytic core - and F(0) - the membrane proton channel. F(1) has five subunits: alpha(3), beta(3), gamma(1), delta(1), epsilon(1). F(0) has three main subunits: a(1), b(2) and c(10-14). The alpha and beta chains form an alternating ring which encloses part of the gamma chain. F(1) is attached to F(0) by a central stalk formed by the gamma and epsilon chains, while a peripheral stalk is formed by the delta and b chains.

The protein resides in the cell inner membrane. F(1)F(0) ATP synthase produces ATP from ADP in the presence of a proton or sodium gradient. F-type ATPases consist of two structural domains, F(1) containing the extramembraneous catalytic core and F(0) containing the membrane proton channel, linked together by a central stalk and a peripheral stalk. During catalysis, ATP synthesis in the catalytic domain of F(1) is coupled via a rotary mechanism of the central stalk subunits to proton translocation. In terms of biological role, component of the F(0) channel, it forms part of the peripheral stalk, linking F(1) to F(0). The protein is ATP synthase subunit b 1 of Pseudoalteromonas atlantica (strain T6c / ATCC BAA-1087).